A 162-amino-acid chain; its full sequence is Caveolin-2 (162 aa).

Residues 1 to 86 (MGLETEKADV…FEISKYVIYK (86 aa)) are Cytoplasmic-facing. A Phosphotyrosine; by SRC modification is found at Tyr19. Phosphoserine occurs at positions 20 and 23. At Tyr27 the chain carries Phosphotyrosine; by SRC. Ser36 is subject to Phosphoserine. Residues 87–107 (FLTVFLAIPLAFTAGILFATL) constitute an intramembrane region (helical). Topologically, residues 108 to 162 (SCLHIWIIMPFVKTCLMVLPSVQTIWRSVTDVIIAPLCTSIGRICSSVSLQVSHD) are cytoplasmic.

This sequence belongs to the caveolin family. In terms of assembly, monomer or homodimer. Interacts with CAV1; the interaction forms a stable heterooligomeric complex that is required for targeting to lipid rafts and for caveolae formation. Tyrosine phosphorylated forms do not form heterooligomers with the Tyr-19-phosphorylated form existing as a monomer or dimer, and the Tyr-27-form as a monomer only. Interacts (tyrosine phosphorylated form) with the SH2 domain-containing proteins, RASA1, NCK1 and SRC. Interacts (tyrosine phosphorylated form) with INSR, the interaction (Tyr-27-phosphorylated form) is increased on insulin stimulation. Interacts (Tyr-19 phosphorylated form) with MAPK1 (phosphorylated form); the interaction, promoted by insulin, leads to nuclear location and MAPK1 activation. Interacts with STAT3; the interaction is increased on insulin-induced tyrosine phosphorylation leading to STAT activation. Post-translationally, phosphorylated on serine and tyrosine residues. CAV1 promotes phosphorylation on Ser-23 which then targets the complex to the plasma membrane, lipid rafts and caveolae. Phosphorylation on Ser-36 appears to modulate mitosis in endothelial cells. Phosphorylation on both Tyr-19 and Tyr-27 is required for insulin-induced 'Ser-727' phosphorylation of STAT3 and its activation. Phosphorylation on Tyr-19 is required for insulin-induced phosphorylation of MAPK1 and DNA binding of STAT3. Tyrosine phosphorylation is induced by both EGF and insulin (By. similarity).

It is found in the nucleus. The protein resides in the cytoplasm. The protein localises to the golgi apparatus membrane. Its subcellular location is the cell membrane. It localises to the membrane. It is found in the caveola. Functionally, may act as a scaffolding protein within caveolar membranes. Interacts directly with G-protein alpha subunits and can functionally regulate their activity. Acts as an accessory protein in conjunction with CAV1 in targeting to lipid rafts and driving caveolae formation. The Ser-36 phosphorylated form has a role in modulating mitosis in endothelial cells. Positive regulator of cellular mitogenesis of the MAPK signaling pathway. Required for the insulin-stimulated nuclear translocation and activation of MAPK1 and STAT3, and the subsequent regulation of cell cycle progression. The protein is Caveolin-2 (CAV2) of Atelerix albiventris (Middle-African hedgehog).